The sequence spans 418 residues: MISFLVQKSEAKYWKDVVQNKNKFLKNIGIISGPKLVDTYSNQFEADFLKKCVLIPTSYNKEDLPKDILDCPRIYLIEEEVKSVQTDEKLQIKVLRYVSQILHTTVSEEQYPVPSRFVIYPPLALLSLNSFGTKEWHLFFQSYANVDVKAGLFDIFAREWNVSHIAINEPIPVGDVMRRPLSLKPLYGDFGVLIDGNPSEQDFQKAFWVSCRQNGIYQTWAPLYTMFSRGNSIEKARVLNFSYIKDEIIADLYAGIGYFTFSYVKAGASTVFCWEINPWSVEALRRAALKNGWSIYVVRNGENYEFKVGTHRIVVFLESNVYAAERFSKMNISARHINLGMLPSSEKSWSTATSILKRESHSFIHVHENVKDEDIETYSSEVNSCFSKMLAKNTVCVTNCVKSFSPRVSHIVYDIETV.

Residues serine 228, lysine 235, 275–276, and 302–303 contribute to the S-adenosyl-L-methionine site; these read EI and EN.

It belongs to the class I-like SAM-binding methyltransferase superfamily. TRM5/TYW2 family.

It is found in the cytoplasm. The protein resides in the nucleus. It carries out the reaction 4-demethylwyosine(37) in tRNA(Phe) + S-adenosyl-L-methionine = 4-demethyl-7-[(3S)-3-amino-3-carboxypropyl]wyosine(37) in tRNA(Phe) + S-methyl-5'-thioadenosine + H(+). It participates in tRNA modification; wybutosine-tRNA(Phe) biosynthesis. Functionally, S-adenosyl-L-methionine-dependent transferase that acts as a component of the wybutosine biosynthesis pathway. Wybutosine is a hyper modified guanosine with a tricyclic base found at the 3'-position adjacent to the anticodon of eukaryotic phenylalanine tRNA. Catalyzes the transfer of the alpha-amino-alpha-carboxypropyl (acp) group from S-adenosyl-L-methionine to the C-7 position of 4-demethylwyosine (imG-14) to produce wybutosine-86. The chain is tRNA wybutosine-synthesizing protein 2 (trm12) from Schizosaccharomyces pombe (strain 972 / ATCC 24843) (Fission yeast).